A 116-amino-acid chain; its full sequence is uncharacterized protein (116 aa).

A signal peptide spans 1-19; the sequence is MRWDVIILYAISRPYATRR. Residues 18-50 form a disordered region; that stretch reads RRTGSHTHPRDSRYIAANQRRPPSACRVGPSPA.

This is an uncharacterized protein from Saccharomyces cerevisiae (strain ATCC 204508 / S288c) (Baker's yeast).